The sequence spans 449 residues: Chlorobenzene dioxygenase subunit alpha (449 aa).

The Rieske domain maps to Trp54 to Ala163. 4 residues coordinate [2Fe-2S] cluster: Cys96, His98, Cys116, and His119. Residues His222, His228, and Asp376 each contribute to the Fe cation site.

The protein belongs to the bacterial ring-hydroxylating dioxygenase alpha subunit family. This dioxygenase system consists of four proteins: the two subunits of the oxygenase component (TecA1 and TecA2), a ferredoxin (TecA3) and a ferredoxin reductase (TecA4). Requires [2Fe-2S] cluster as cofactor. It depends on Fe cation as a cofactor.

It carries out the reaction chlorobenzene + NADH + O2 + H(+) = (1R,2R)-3-chlorocyclohexa-3,5-diene-1,2-diol + NAD(+). It functions in the pathway aromatic compound metabolism. Functionally, part of the oxygenase component of the chlorobenzene dioxygenase system that catalyzes the dihydroxylation of a range of aromatic compounds, including chlorinated benzenes and toluenes, and dinuclear aromatics such as biphenyl and dibenzo-p-dioxin. The alpha subunit is responsible for substrate specificity. The chain is Chlorobenzene dioxygenase subunit alpha from Cupriavidus sp. (strain PS12).